The chain runs to 267 residues: MIVHPSRENFSSAVNKGSDFRLKGEPLKHVLLVDDDVAMRHLIIEYLTIHAFKVTAVADSTQFTRVLSSATVDVVVVDLNLGREDGLEIVRNLAAKSDIPIIIISGDRLEETDKVVALELGASDFIAKPFSIREFLARIRVALRVRPNVVRSKDRRSFCFTDWTLNLRQRRLMSEAGGEVKLTAGEFNLLLAFLEKPRDVLSREQLLIASRVRDEEVYDRSIDVLILRLRRKLEADPSSPQLIKTARGAGYFFDADVQVSHGGTMAA.

The region spanning 29 to 143 (HVLLVDDDVA…EFLARIRVAL (115 aa)) is the Response regulatory domain. 4-aspartylphosphate is present on Asp78. A DNA-binding region (ompR/PhoB-type) is located at residues 155–255 (RRSFCFTDWT…ARGAGYFFDA (101 aa)).

In terms of processing, phosphorylated by wide host range (WHR) VirA protein.

It is found in the cytoplasm. Its function is as follows. VirG is required for the positive regulation of at least two vir loci encoded by the Ti plasmid of A.tumefaciens. In Agrobacterium tumefaciens (strain 15955), this protein is Regulatory protein VirG (virG).